The primary structure comprises 337 residues: Tryptophan--tRNA ligase (337 aa).

Residues 11-13 (QPT) and 19-20 (GN) contribute to the ATP site. A 'HIGH' region motif is present at residues 12 to 20 (PTGALHLGN). L-tryptophan is bound at residue D135. ATP contacts are provided by residues 147-149 (GED), V191, and 200-204 (KMSKS). Positions 200-204 (KMSKS) match the 'KMSKS' region motif.

It belongs to the class-I aminoacyl-tRNA synthetase family. In terms of assembly, homodimer.

It is found in the cytoplasm. It carries out the reaction tRNA(Trp) + L-tryptophan + ATP = L-tryptophyl-tRNA(Trp) + AMP + diphosphate + H(+). Catalyzes the attachment of tryptophan to tRNA(Trp). The chain is Tryptophan--tRNA ligase from Prochlorococcus marinus (strain MIT 9313).